Consider the following 457-residue polypeptide: ATP synthase subunit beta (457 aa).

Residue 147–154 (GGAGVGKT) participates in ATP binding.

It belongs to the ATPase alpha/beta chains family. F-type ATPases have 2 components, CF(1) - the catalytic core - and CF(0) - the membrane proton channel. CF(1) has five subunits: alpha(3), beta(3), gamma(1), delta(1), epsilon(1). CF(0) has three main subunits: a(1), b(2) and c(9-12). The alpha and beta chains form an alternating ring which encloses part of the gamma chain. CF(1) is attached to CF(0) by a central stalk formed by the gamma and epsilon chains, while a peripheral stalk is formed by the delta and b chains.

The protein localises to the cell inner membrane. The catalysed reaction is ATP + H2O + 4 H(+)(in) = ADP + phosphate + 5 H(+)(out). Functionally, produces ATP from ADP in the presence of a proton gradient across the membrane. The catalytic sites are hosted primarily by the beta subunits. In Actinobacillus pleuropneumoniae serotype 3 (strain JL03), this protein is ATP synthase subunit beta.